The primary structure comprises 373 residues: Structure-specific endonuclease subunit EME2 (373 aa).

The segment at 24–52 is disordered; sequence RPQTWEISDSDGEGVPAREVGTQAPSPAG. Residues 47-260 are nuclease-like domain; forms the post-nick DNA binding interface and is involved in DNA recognition and bending; the sequence is APSPAGERRA…LPSKQHRDSQ (214 aa). Positions 282–373 are helix-hairpin-helix (2HhH); forms the pre-nick DNA binding interface and is involved in DNA recognition and bending; that stretch reads GLRGVWWRQI…NPDLLLDLSS (92 aa).

Belongs to the EME1/MMS4 family. As to quaternary structure, part of the heterodimeric MUS81-EME2 complex; the complex forms specifically during the DNA replication phase of the cell cycle.

It is found in the nucleus. Non-catalytic subunit of the structure-specific, heterodimeric DNA endonuclease MUS81-EME2 which is involved in the maintenance of genome stability. In the complex, EME2 is required for DNA cleavage, participating in DNA recognition and bending. MUS81-EME2 cleaves 3'-flaps and nicked Holliday junctions, and exhibit limited endonuclease activity with 5' flaps and nicked double-stranded DNAs. MUS81-EME2 which is active during the replication of DNA is more specifically involved in replication fork processing. Replication forks frequently encounter obstacles to their passage, including DNA base lesions, DNA interstrand cross-links, difficult-to-replicate sequences, transcription bubbles, or tightly bound proteins. One mechanism for the restart of a stalled replication fork involves nucleolytic cleavage mediated by the MUS81-EME2 endonuclease. By acting upon the stalled fork, MUS81-EME2 generates a DNA double-strand break (DSB) that can be repaired by homologous recombination, leading to the restoration of an active fork. MUS81-EME2 could also function in telomere maintenance. This chain is Structure-specific endonuclease subunit EME2, found in Mus musculus (Mouse).